The sequence spans 98 residues: Histone H4-like protein type G (98 aa).

A DNA-binding region spans residues 17 to 21 (KCHRK).

This sequence belongs to the histone H4 family. In terms of assembly, the nucleosome is a histone octamer containing two molecules each of H2A, H2B, H3 and H4 assembled in one H3-H4 heterotetramer and two H2A-H2B heterodimers. The octamer wraps approximately 147 bp of DNA.

The protein localises to the nucleus. It is found in the chromosome. Core component of nucleosome. Nucleosomes wrap and compact DNA into chromatin, limiting DNA accessibility to the cellular machineries which require DNA as a template. Histones thereby play a central role in transcription regulation, DNA repair, DNA replication and chromosomal stability. DNA accessibility is regulated via a complex set of post-translational modifications of histones, also called histone code, and nucleosome remodeling. The protein is Histone H4-like protein type G of Homo sapiens (Human).